We begin with the raw amino-acid sequence, 341 residues long: Glyceraldehyde-3-phosphate dehydrogenase 3 (341 aa).

NAD(+) is bound by residues 13 to 14 (RI), aspartate 35, and arginine 85. Residues 157 to 159 (SCT), threonine 188, 217 to 218 (TG), and arginine 240 each bind D-glyceraldehyde 3-phosphate. The Nucleophile role is filled by cysteine 158. Asparagine 322 contributes to the NAD(+) binding site.

The protein belongs to the glyceraldehyde-3-phosphate dehydrogenase family. In terms of assembly, homotetramer.

It localises to the cytoplasm. The catalysed reaction is D-glyceraldehyde 3-phosphate + phosphate + NAD(+) = (2R)-3-phospho-glyceroyl phosphate + NADH + H(+). It participates in carbohydrate degradation; glycolysis; pyruvate from D-glyceraldehyde 3-phosphate: step 1/5. This is Glyceraldehyde-3-phosphate dehydrogenase 3 (gpd-3) from Caenorhabditis elegans.